A 132-amino-acid polypeptide reads, in one-letter code: Small ribosomal subunit protein uS8c (132 aa).

This sequence belongs to the universal ribosomal protein uS8 family. As to quaternary structure, part of the 30S ribosomal subunit.

The protein localises to the plastid. Its subcellular location is the cyanelle. Functionally, one of the primary rRNA binding proteins, it binds directly to 16S rRNA central domain where it helps coordinate assembly of the platform of the 30S subunit. The chain is Small ribosomal subunit protein uS8c (rps8) from Cyanophora paradoxa.